A 304-amino-acid chain; its full sequence is Putative S-adenosyl-L-methionine-dependent methyltransferase MMAR_1057 (304 aa).

Residues Asp-130 and 159-160 each bind S-adenosyl-L-methionine; that span reads DL.

Belongs to the UPF0677 family.

In terms of biological role, exhibits S-adenosyl-L-methionine-dependent methyltransferase activity. This Mycobacterium marinum (strain ATCC BAA-535 / M) protein is Putative S-adenosyl-L-methionine-dependent methyltransferase MMAR_1057.